A 404-amino-acid chain; its full sequence is Exodeoxyribonuclease 7 large subunit (404 aa).

It belongs to the XseA family. As to quaternary structure, heterooligomer composed of large and small subunits.

It is found in the cytoplasm. It catalyses the reaction Exonucleolytic cleavage in either 5'- to 3'- or 3'- to 5'-direction to yield nucleoside 5'-phosphates.. In terms of biological role, bidirectionally degrades single-stranded DNA into large acid-insoluble oligonucleotides, which are then degraded further into small acid-soluble oligonucleotides. The chain is Exodeoxyribonuclease 7 large subunit from Caldanaerobacter subterraneus subsp. tengcongensis (strain DSM 15242 / JCM 11007 / NBRC 100824 / MB4) (Thermoanaerobacter tengcongensis).